The chain runs to 426 residues: MFVFLALITLTTCLQIPLNPTIDDFYNPPKDLETSQLGDVLKWRKMPFPVTSMFVNLPISNAWQISVRSQDTLNNSLAIVATILEPPNGDKNKLISHQAFENSPLLSCSPSYSMQVPSFETFQIQADLIFISGLLSQGWYVVVPDYEGPNSVFPVGRQSAYSVLDSIRGTIKFFNSTGNSTVKTALLGYSYGAVASLWASIVQPNYAPELELVGAAVGCTIPNITAFIEKVDEGPYSGLIVNIFNGLANEYRHFRDRLIHFGALQPLGCLFPICRKFFFQKMIGGVYDAQVLTDETIKETIEINNLLSTRAVPQIPVFLFHSKFNEMSPFLEILKLEKLWCSQLGVNLEIAEDMSYNHMVEAFSGMPAAITWIEKRWNNSTLGGCKHVHRLSNFEYPGIAPFLSQYFRSSLQMVLNNNRYFNNTTR.

Residues 1–15 (MFVFLALITLTTCLQ) form the signal peptide. 3 N-linked (GlcNAc...) asparagine glycosylation sites follow: asparagine 74, asparagine 175, and asparagine 179. 2 disulfide bridges follow: cysteine 108-cysteine 269 and cysteine 341-cysteine 385. Serine 190 serves as the catalytic Charge relay system. Residue asparagine 223 is glycosylated (N-linked (GlcNAc...) asparagine). The Charge relay system role is filled by histidine 358. N-linked (GlcNAc...) asparagine glycans are attached at residues asparagine 378, asparagine 379, asparagine 422, and asparagine 423.

This sequence belongs to the AB hydrolase superfamily. Lipase family. Class Lip subfamily.

The enzyme catalyses a triacylglycerol + H2O = a diacylglycerol + a fatty acid + H(+). Functionally, secreted lipase that is able to hydrolze both the neutral triacylglycerols and the monopalmitate ester Tween 40, allowing the use of hydrolyzed products as carbon sources. Has broad lipolytic activity, which may be important for colonization and subsequent infection, therefore contributing to the persistence and virulence in human tissue. The sequence is that of Lipase 7 from Candida albicans (strain SC5314 / ATCC MYA-2876) (Yeast).